The chain runs to 189 residues: Der GTPase-activating protein YihI (189 aa).

Positions 1-81 (MARKKKTRRV…ALAKKDPRLG (81 aa)) are disordered. Composition is skewed to basic and acidic residues over residues 9-27 (RVSD…ELPK) and 35-46 (TRYELDAKARED). Over residues 60-71 (RHSATENNNNHQ) the composition is skewed to polar residues.

The protein belongs to the YihI family. In terms of assembly, interacts with Der.

Functionally, a GTPase-activating protein (GAP) that modifies Der/EngA GTPase function. May play a role in ribosome biogenesis. The protein is Der GTPase-activating protein YihI of Pasteurella multocida (strain Pm70).